We begin with the raw amino-acid sequence, 598 residues long: Aluminum-activated malate transporter 9 (598 aa).

6 helical membrane passes run 88-108, 117-137, 144-164, 170-190, 194-214, and 227-247; these read IVFS…IFYQ, YSVW…GATL, ALGT…STLF, IFCT…KLYP, AYEY…ISGF, and FLLI…IYPI.

Belongs to the aromatic acid exporter (TC 2.A.85) family. Expressed in hypocotyls, leaves, roots, flowers, sepals and stamina. In leaves, expressed almost exclusively in mesophyll cells.

It is found in the vacuole membrane. With respect to regulation, slow activation by external aluminum. Vacuolar malate channel. Has a higher selectivity for malate than for fumarate. Also exhibits a weak chloride conductance. The sequence is that of Aluminum-activated malate transporter 9 (ALMT9) from Arabidopsis thaliana (Mouse-ear cress).